A 341-amino-acid chain; its full sequence is Phosphate acyltransferase (341 aa).

This sequence belongs to the PlsX family. Homodimer. Probably interacts with PlsY.

It localises to the cytoplasm. The catalysed reaction is a fatty acyl-[ACP] + phosphate = an acyl phosphate + holo-[ACP]. The protein operates within lipid metabolism; phospholipid metabolism. Functionally, catalyzes the reversible formation of acyl-phosphate (acyl-PO(4)) from acyl-[acyl-carrier-protein] (acyl-ACP). This enzyme utilizes acyl-ACP as fatty acyl donor, but not acyl-CoA. The protein is Phosphate acyltransferase of Lacticaseibacillus casei (strain BL23) (Lactobacillus casei).